The sequence spans 147 residues: D-aminoacyl-tRNA deacylase (147 aa).

Positions glycine 136 to proline 137 match the Gly-cisPro motif, important for rejection of L-amino acids motif.

It belongs to the DTD family. Homodimer.

The protein localises to the cytoplasm. The enzyme catalyses glycyl-tRNA(Ala) + H2O = tRNA(Ala) + glycine + H(+). It catalyses the reaction a D-aminoacyl-tRNA + H2O = a tRNA + a D-alpha-amino acid + H(+). Functionally, an aminoacyl-tRNA editing enzyme that deacylates mischarged D-aminoacyl-tRNAs. Also deacylates mischarged glycyl-tRNA(Ala), protecting cells against glycine mischarging by AlaRS. Acts via tRNA-based rather than protein-based catalysis; rejects L-amino acids rather than detecting D-amino acids in the active site. By recycling D-aminoacyl-tRNA to D-amino acids and free tRNA molecules, this enzyme counteracts the toxicity associated with the formation of D-aminoacyl-tRNA entities in vivo and helps enforce protein L-homochirality. The polypeptide is D-aminoacyl-tRNA deacylase (Streptococcus agalactiae serotype Ia (strain ATCC 27591 / A909 / CDC SS700)).